Consider the following 70-residue polypeptide: Exodeoxyribonuclease 7 small subunit (70 aa).

Belongs to the XseB family. Heterooligomer composed of large and small subunits.

It localises to the cytoplasm. It catalyses the reaction Exonucleolytic cleavage in either 5'- to 3'- or 3'- to 5'-direction to yield nucleoside 5'-phosphates.. Functionally, bidirectionally degrades single-stranded DNA into large acid-insoluble oligonucleotides, which are then degraded further into small acid-soluble oligonucleotides. This chain is Exodeoxyribonuclease 7 small subunit, found in Streptococcus pneumoniae serotype 2 (strain D39 / NCTC 7466).